The sequence spans 341 residues: S-adenosylmethionine:tRNA ribosyltransferase-isomerase (341 aa).

The protein belongs to the QueA family. As to quaternary structure, monomer.

The protein resides in the cytoplasm. The enzyme catalyses 7-aminomethyl-7-carbaguanosine(34) in tRNA + S-adenosyl-L-methionine = epoxyqueuosine(34) in tRNA + adenine + L-methionine + 2 H(+). It functions in the pathway tRNA modification; tRNA-queuosine biosynthesis. Transfers and isomerizes the ribose moiety from AdoMet to the 7-aminomethyl group of 7-deazaguanine (preQ1-tRNA) to give epoxyqueuosine (oQ-tRNA). In Clostridium botulinum (strain Eklund 17B / Type B), this protein is S-adenosylmethionine:tRNA ribosyltransferase-isomerase.